Consider the following 246-residue polypeptide: Eukaryotic translation initiation factor 6 (246 aa).

It belongs to the eIF-6 family. Monomer. Associates with the 60S ribosomal subunit.

The protein resides in the cytoplasm. It is found in the nucleus. It localises to the nucleolus. Its function is as follows. Binds to the 60S ribosomal subunit and prevents its association with the 40S ribosomal subunit to form the 80S initiation complex in the cytoplasm. May also be involved in ribosome biogenesis. Involved in miRNA-mediated gene silencing. The sequence is that of Eukaryotic translation initiation factor 6 from Caenorhabditis elegans.